The sequence spans 92 residues: Probable Fe(2+)-trafficking protein (92 aa).

The protein belongs to the Fe(2+)-trafficking protein family.

Its function is as follows. Could be a mediator in iron transactions between iron acquisition and iron-requiring processes, such as synthesis and/or repair of Fe-S clusters in biosynthetic enzymes. The chain is Probable Fe(2+)-trafficking protein from Shewanella oneidensis (strain ATCC 700550 / JCM 31522 / CIP 106686 / LMG 19005 / NCIMB 14063 / MR-1).